The following is a 346-amino-acid chain: Biotin synthase (346 aa).

Residues 38-256 (RQVQVSTLLS…IAIARIMMPT (219 aa)) form the Radical SAM core domain. Residues Cys-53, Cys-57, and Cys-60 each coordinate [4Fe-4S] cluster. 4 residues coordinate [2Fe-2S] cluster: Cys-97, Cys-128, Cys-188, and Arg-260.

Belongs to the radical SAM superfamily. Biotin synthase family. As to quaternary structure, homodimer. The cofactor is [4Fe-4S] cluster. [2Fe-2S] cluster serves as cofactor.

The enzyme catalyses (4R,5S)-dethiobiotin + (sulfur carrier)-SH + 2 reduced [2Fe-2S]-[ferredoxin] + 2 S-adenosyl-L-methionine = (sulfur carrier)-H + biotin + 2 5'-deoxyadenosine + 2 L-methionine + 2 oxidized [2Fe-2S]-[ferredoxin]. It participates in cofactor biosynthesis; biotin biosynthesis; biotin from 7,8-diaminononanoate: step 2/2. In terms of biological role, catalyzes the conversion of dethiobiotin (DTB) to biotin by the insertion of a sulfur atom into dethiobiotin via a radical-based mechanism. The protein is Biotin synthase of Klebsiella pneumoniae (strain 342).